A 299-amino-acid polypeptide reads, in one-letter code: MGIFVCRNSLRMLNVRWLYHRCLSLYNSNHGFNEAKIKEKLAQFTGGSVDLSKMDNGIAEICINNPSRMNAFTGTMMIELEERISDLENWKNGKGLIVYGAENTFCSGSDLNAVKAISNPQEGMMMCMLMQNTLTRLQRLPLISVALIQGKALGGGAELCTACDFRLMTEGSEIRFVHKQMGLVPGWGGAARLIHLIGSRHALKLLSGALRVHPENALELGLADNILLGTEDGFLSEAENWIMPYIKGPSDVSRAVKKVIISGREQKLEDALRTEKEIFGTVWGGLANLQALAKGTKHK.

This sequence belongs to the enoyl-CoA hydratase/isomerase family.

Its subcellular location is the cytoplasm. It is found in the cytosol. It catalyses the reaction (2S)-ethylmalonyl-CoA + H(+) = butanoyl-CoA + CO2. It carries out the reaction (S)-methylmalonyl-CoA + H(+) = propanoyl-CoA + CO2. The enzyme catalyses (2R)-ethylmalonyl-CoA + H(+) = butanoyl-CoA + CO2. Its function is as follows. Decarboxylates ethylmalonyl-CoA, a potentially toxic metabolite, to form butyryl-CoA, suggesting it might be involved in metabolite proofreading. Acts preferentially on (S)-ethylmalonyl-CoA but also has some activity on the (R)-isomer. Also has methylmalonyl-CoA decarboxylase activity at lower level. The chain is Ethylmalonyl-CoA decarboxylase (echdc1) from Xenopus tropicalis (Western clawed frog).